The sequence spans 175 residues: Regenerating islet-derived protein 3-beta (175 aa).

Residues 1–26 form the signal peptide; it reads MLPPTACSVMSWMLLSCLMLLSQVQG. Positions 27-37 are excised as a propeptide; sequence EDSLKNIPSAR. 3 disulfide bridges follow: Cys-40-Cys-51, Cys-68-Cys-171, and Cys-146-Cys-163. One can recognise a C-type lectin domain in the interval 47–172; the sequence is YGSYCYALFQ…CEVKLPYVCK (126 aa). Position 107 (His-107) interacts with Zn(2+). Positions 114-116 match the EPN motif; that stretch reads EPN. Zn(2+) is bound at residue Glu-121.

In terms of assembly, forms a hexameric membrane-permeabilizing oligomeric pore on membrane phospholipids. The hexamer is formed by three dimers related by helical symmetry. Forms filaments, filamentation traps pore complexes and limits damage to host cells. Interacts with EXTL3. Post-translationally, proteolytic processing by trypsin removes an inhibitory N-terminal propeptide and is essential for peptidoglycan binding and antibacterial activity. As to expression, constitutively expressed in the small intestine, moderately in colon and at an extremely low level in healthy pancreas.

The protein localises to the secreted. Its activity is regulated as follows. Lipopolysaccharide inhibits pore-forming activity, explaining why is bactericidal for Gram-positive but not Gram-negative bacteria. In terms of biological role, bactericidal C-type lectin which acts against several intestinal Gram-positive and Gram-negative bacteria. Lacks antibacterial activity against S.typhimurium. May play a role in protection against infection with S.enteritidis by inhibiting its translocation from the gut lumen into intestinal tissues and further extraintestinal tissues. Acts as a hormone in response to different stimuli. Secreted by different cell types to activate its receptor EXTL3 and induce cell specific signaling pathways. In pancreas, is able stimulate cell proliferation. The chain is Regenerating islet-derived protein 3-beta from Mus musculus (Mouse).